A 216-amino-acid polypeptide reads, in one-letter code: Hydrogenase-4 component E (216 aa).

Topologically, residues 1–3 (MTG) are periplasmic. A helical membrane pass occupies residues 4-24 (SMIVNNLAGLMMLTSLFVISV). Residues 25-38 (KSYRLSCGFYACQS) lie on the Cytoplasmic side of the membrane. The next 2 membrane-spanning stretches (helical) occupy residues 39–59 (LVLV…QLLI) and 60–80 (WSAS…TYAA). Residues 81 to 92 (RNIPQNIPEKAL) are Cytoplasmic-facing. A helical membrane pass occupies residues 93–113 (FGPAMMALLAALIVLLCAFVV). Over 114–122 (QPVKLPMAT) the chain is Periplasmic. A helical membrane pass occupies residues 123 to 143 (GLKPALAVALGHFLLGLLCIV). At 144–150 (SQRNILR) the chain is on the cytoplasmic side. The chain crosses the membrane as a helical span at residues 151-171 (QIFGYCLMENGSHLVLALLAW). Residues 172–175 (RAPE) are Periplasmic-facing. Residues 176 to 196 (LVEIGIATDAIFAVIVMVLLA) form a helical membrane-spanning segment. Residues 197–216 (RKIWRTHGTLDVNNLTALKG) are Cytoplasmic-facing.

The protein resides in the cell inner membrane. The polypeptide is Hydrogenase-4 component E (hyfE) (Escherichia coli O157:H7).